Reading from the N-terminus, the 138-residue chain is Ergosterol biosynthetic protein 28 (138 aa).

A helical transmembrane segment spans residues 17–33; sequence LPYWLLFISVVSIFNSV. A glycan (N-linked (GlcNAc...) asparagine) is linked at Asn40. Transmembrane regions (helical) follow at residues 56 to 75, 87 to 107, and 114 to 131; these read LSAR…RFYG, LTQF…LYFG, and GLSG…WMYL.

The protein belongs to the ERG28 family. As to quaternary structure, heterotetramer of ERG25, ERG26, ERG27 and ERG28. ERG28 acts as a scaffold to tether ERG27 and other 4,4-demethylation-related enzymes, forming a demethylation enzyme complex, in the endoplasmic reticulum. Interacts with ERG25, ERG26 and ERG27. Also interacts with ERG1, ERG3, ERG5, ERG6 and ERG11.

The protein resides in the endoplasmic reticulum membrane. Its function is as follows. Part of the third module of ergosterol biosynthesis pathway that includes the late steps of the pathway. ERG28 has a role as a scaffold to help anchor the catalytic components of the C-4 demethylation complex ERG25, ERG26 and ERG27 to the endoplasmic reticulum. The third module or late pathway involves the ergosterol synthesis itself through consecutive reactions that mainly occur in the endoplasmic reticulum (ER) membrane. Firstly, the squalene synthase ERG9 catalyzes the condensation of 2 farnesyl pyrophosphate moieties to form squalene, which is the precursor of all steroids. Squalene synthase is crucial for balancing the incorporation of farnesyl diphosphate (FPP) into sterol and nonsterol isoprene synthesis. Secondly, the squalene epoxidase ERG1 catalyzes the stereospecific oxidation of squalene to (S)-2,3-epoxysqualene, which is considered to be a rate-limiting enzyme in steroid biosynthesis. Then, the lanosterol synthase ERG7 catalyzes the cyclization of (S)-2,3 oxidosqualene to lanosterol, a reaction that forms the sterol core. In the next steps, lanosterol is transformed to zymosterol through a complex process involving various demethylation, reduction and desaturation reactions. The lanosterol 14-alpha-demethylase ERG11 (also known as CYP51) catalyzes C14-demethylation of lanosterol to produce 4,4'-dimethyl cholesta-8,14,24-triene-3-beta-ol, which is critical for ergosterol biosynthesis. The C-14 reductase ERG24 reduces the C14=C15 double bond of 4,4-dimethyl-cholesta-8,14,24-trienol to produce 4,4-dimethyl-cholesta-8,24-dienol. 4,4-dimethyl-cholesta-8,24-dienol is substrate of the C-4 demethylation complex ERG25-ERG26-ERG27 in which ERG25 catalyzes the three-step monooxygenation required for the demethylation of 4,4-dimethyl and 4alpha-methylsterols, ERG26 catalyzes the oxidative decarboxylation that results in a reduction of the 3-beta-hydroxy group at the C-3 carbon to an oxo group, and ERG27 is responsible for the reduction of the keto group on the C-3. ERG28 has a role as a scaffold to help anchor ERG25, ERG26 and ERG27 to the endoplasmic reticulum and ERG29 regulates the activity of the iron-containing C4-methylsterol oxidase ERG25. Then, the sterol 24-C-methyltransferase ERG6 catalyzes the methyl transfer from S-adenosyl-methionine to the C-24 of zymosterol to form fecosterol. The C-8 sterol isomerase ERG2 catalyzes the reaction which results in unsaturation at C-7 in the B ring of sterols and thus converts fecosterol to episterol. The sterol-C5-desaturase ERG3 then catalyzes the introduction of a C-5 double bond in the B ring to produce 5-dehydroepisterol. The C-22 sterol desaturase ERG5 further converts 5-dehydroepisterol into ergosta-5,7,22,24(28)-tetraen-3beta-ol by forming the C-22(23) double bond in the sterol side chain. Finally, ergosta-5,7,22,24(28)-tetraen-3beta-ol is substrate of the C-24(28) sterol reductase ERG4 to produce ergosterol. This is Ergosterol biosynthetic protein 28 from Candida albicans (strain SC5314 / ATCC MYA-2876) (Yeast).